A 212-amino-acid polypeptide reads, in one-letter code: Methylthioribulose-1-phosphate dehydratase (212 aa).

Zn(2+)-binding residues include His97 and His99.

This sequence belongs to the aldolase class II family. MtnB subfamily. In terms of assembly, homotetramer. It depends on Zn(2+) as a cofactor.

It catalyses the reaction 5-(methylsulfanyl)-D-ribulose 1-phosphate = 5-methylsulfanyl-2,3-dioxopentyl phosphate + H2O. It participates in amino-acid biosynthesis; L-methionine biosynthesis via salvage pathway; L-methionine from S-methyl-5-thio-alpha-D-ribose 1-phosphate: step 2/6. Functionally, catalyzes the dehydration of methylthioribulose-1-phosphate (MTRu-1-P) into 2,3-diketo-5-methylthiopentyl-1-phosphate (DK-MTP-1-P). The sequence is that of Methylthioribulose-1-phosphate dehydratase from Bacillus cereus (strain ATCC 10987 / NRS 248).